Consider the following 155-residue polypeptide: Small ribosomal subunit protein uS7c (155 aa).

It belongs to the universal ribosomal protein uS7 family. Part of the 30S ribosomal subunit.

The protein resides in the plastid. The protein localises to the chloroplast. In terms of biological role, one of the primary rRNA binding proteins, it binds directly to 16S rRNA where it nucleates assembly of the head domain of the 30S subunit. The sequence is that of Small ribosomal subunit protein uS7c (rps7) from Cryptomeria japonica (Japanese cedar).